The chain runs to 476 residues: Amino acid permease 3 (476 aa).

Residues 1–33 (MVQNHQTVLAVDMPQTGGSKYLDDDGKNKRTGS) lie on the Cytoplasmic side of the membrane. A helical membrane pass occupies residues 34 to 54 (VWTASAHIITAVIGSGVLSLA). Over 55 to 57 (WAT) the chain is Extracellular. Residues 58–78 (AQLGWLAGPVVMLLFSAVTYF) traverse the membrane as a helical segment. The Cytoplasmic portion of the chain corresponds to 79–122 (TSSLLAACYRSGDPISGKRNYTYMDAVRSNLGGVKVTLCGIVQY). The helical transmembrane segment at 123–143 (LNIFGVAIGYTIASAISMMAI) threads the bilayer. The Extracellular segment spans residues 144-166 (KRSNCFHKSGGKDPCHMNSNPYM). Helical transmembrane passes span 167 to 187 (IAFGLVQILFSQIPDFDQLWW) and 188 to 208 (LSILAAVMSFTYSSAGLALGI). Over 209–277 (AQVVVNGKVK…EEKTMKKATL (69 aa)) the chain is Extracellular. The helical transmembrane segment at 278–298 (VSVSVTTMFYMLCGCMGYAAF) threads the bilayer. Residues 299-300 (GD) lie on the Cytoplasmic side of the membrane. A helical transmembrane segment spans residues 301–321 (LSPGNLLTGFGFYNPYWLLDI). The Extracellular portion of the chain corresponds to 322–324 (ANA). The chain crosses the membrane as a helical span at residues 325–345 (AIVIHLIGAYQVYCQPLFAFI). Residues 346 to 384 (EKQASIQFPDSEFIAKDIKIPIPGFKPLRLNVFRLIWRT) lie on the Cytoplasmic side of the membrane. 2 helical membrane passes run 385–405 (VFVIITTVISMLLPFFNDVVG) and 406–426 (LLGALGFWPLTVYFPVEMYIA). Over 427 to 441 (QKKIPRWSTRWVCLQ) the chain is Cytoplasmic. Residues 442-462 (VFSLGCLVVSIAAAAGSIAGV) traverse the membrane as a helical segment. At 463–476 (LLDLKSYKPFRSEY) the chain is on the extracellular side.

It belongs to the amino acid/polyamine transporter 2 family. Amino acid/auxin permease (AAAP) (TC 2.A.18.2) subfamily. Expressed in the root phloem. Detected in stamens, in cotyledons, and in major veins of mature leaves.

It is found in the cell membrane. It localises to the nucleus membrane. The protein localises to the endomembrane system. With respect to regulation, inhibited by carbonylcyanide m-chlorophenylhydrazone and 2,4-dinitrophenol. Amino acid-proton symporter. Stereospecific transporter with a broad specificity for GABA, tryptophan and both neutral and basic amino acids. High affinity transport of cationic amino acids. The sequence is that of Amino acid permease 3 (AAP3) from Arabidopsis thaliana (Mouse-ear cress).